The sequence spans 308 residues: MTNKNQFNGLLLVDKPSGISSHDVVARLRRILSTRAVGHSGTLDPMASGLMACLVNEGTKLSQYILEGDKGYRLRAQFGIRTDTLDTTGETLETRPTDHLTRELILSEALKLQGEMEVEVPIYSAIKVQGKKLYEYARGEQEVTIPKKVMKFWDIEPVEIGSDWAEFDIKCSKGSYIRTWIDLLGKALGCGAAMSGLRRTWSSPYKIDQAQTLEQIEASVKGGSLGPAFVPMELALPQVKRIRIKGQDKVLLGNGQISHDLRSQLISAFNPDVDQYIQVLAQEGGELLAVIGLEPGRGFVLRRVFKYS.

The active-site Nucleophile is D44.

Belongs to the pseudouridine synthase TruB family. Type 1 subfamily.

It carries out the reaction uridine(55) in tRNA = pseudouridine(55) in tRNA. In terms of biological role, responsible for synthesis of pseudouridine from uracil-55 in the psi GC loop of transfer RNAs. This Bdellovibrio bacteriovorus (strain ATCC 15356 / DSM 50701 / NCIMB 9529 / HD100) protein is tRNA pseudouridine synthase B.